The sequence spans 235 residues: Adenosine 5'-phosphosulfate reductase (235 aa).

Residues C121, C122, C204, and C207 each coordinate [4Fe-4S] cluster. Catalysis depends on C230, which acts as the Nucleophile; cysteine thiosulfonate intermediate.

It belongs to the PAPS reductase family. CysH subfamily. Requires [4Fe-4S] cluster as cofactor.

It is found in the cytoplasm. It carries out the reaction [thioredoxin]-disulfide + sulfite + AMP + 2 H(+) = adenosine 5'-phosphosulfate + [thioredoxin]-dithiol. Its pathway is sulfur metabolism; hydrogen sulfide biosynthesis; sulfite from sulfate. Functionally, catalyzes the formation of sulfite from adenosine 5'-phosphosulfate (APS) using thioredoxin as an electron donor. The polypeptide is Adenosine 5'-phosphosulfate reductase (Geobacillus thermodenitrificans (strain NG80-2)).